A 336-amino-acid polypeptide reads, in one-letter code: MSEIRTLGEFIVAKQHDFPHASGELSSLIGSIKLAAKIVNREINKAGLVDITGASGEENIQGEQQQKLDVYANDKFKSALEARDQVCGVASEEEDEAVAFNKELNKNAKYVVLMDPLDGSSNIDVNVSVGTIFSIYRRISPIGTPATEEDFLQPGHKQVAAGYIIYGSSTMLVYTTGNGVHGFTYDPSLGVFCLSHENMQIPKDGNIYSINEGNYIRFPEGIKQYLKFCQESKPEDNRPYTSRYIGSLVADFHRNLLKGGIYLYPSTQAYPNGKLRLLYECNPMAMLIEEAGGKATDGEQRILDIKPSELHQRVPFFVGSTNMVNKVHAFLDEWRD.

4 residues coordinate Mg(2+): glutamate 92, aspartate 115, leucine 117, and aspartate 118. Residues 118-121 (DGSS), asparagine 211, tyrosine 244, 262-264 (YLY), and lysine 274 each bind substrate. Glutamate 280 contacts Mg(2+).

This sequence belongs to the FBPase class 1 family. Homotetramer. Requires Mg(2+) as cofactor.

The protein resides in the cytoplasm. The enzyme catalyses beta-D-fructose 1,6-bisphosphate + H2O = beta-D-fructose 6-phosphate + phosphate. It functions in the pathway carbohydrate biosynthesis; gluconeogenesis. This chain is Fructose-1,6-bisphosphatase class 1, found in Aliivibrio fischeri (strain ATCC 700601 / ES114) (Vibrio fischeri).